The primary structure comprises 981 residues: Colossin-C (981 aa).

A signal peptide spans 1 to 23 (MKILYSLLLISSIILNTVLNISS). A glycan (N-linked (GlcNAc...) asparagine) is linked at Asn-63. Residues 172–195 (EQTQPPTQPPTQPPTQPPTPPPFT) are disordered. Residues 177 to 194 (PTQPPTQPPTQPPTPPPF) show a composition bias toward pro residues. N-linked (GlcNAc...) asparagine glycans are attached at residues Asn-222, Asn-591, and Asn-811.

The protein belongs to the serine-aspartate repeat-containing protein (SDr) family.

It localises to the secreted. In Dictyostelium discoideum (Social amoeba), this protein is Colossin-C (colC).